The primary structure comprises 87 residues: Beta-defensin 109C (87 aa).

The first 22 residues, 1–22 (MRLHLLLLILLLFSILLSPVRG), serve as a signal peptide directing secretion. 3 cysteine pairs are disulfide-bonded: cysteine 31–cysteine 59, cysteine 38–cysteine 53, and cysteine 43–cysteine 60.

The protein belongs to the beta-defensin family.

The protein resides in the secreted. Has antibacterial activity. In Homo sapiens (Human), this protein is Beta-defensin 109C (DEFB109C).